A 620-amino-acid chain; its full sequence is Chaperone protein HscA homolog (620 aa).

The protein belongs to the heat shock protein 70 family.

In terms of biological role, chaperone involved in the maturation of iron-sulfur cluster-containing proteins. Has a low intrinsic ATPase activity which is markedly stimulated by HscB. The chain is Chaperone protein HscA homolog from Colwellia psychrerythraea (strain 34H / ATCC BAA-681) (Vibrio psychroerythus).